Consider the following 211-residue polypeptide: uncharacterized protein (211 aa).

The first 27 residues, 1–27 (MKRTSAALVVFLILLFLGLLFLPMFIV), serve as a signal peptide directing secretion.

This is an uncharacterized protein from Archaeoglobus fulgidus (strain ATCC 49558 / DSM 4304 / JCM 9628 / NBRC 100126 / VC-16).